The chain runs to 526 residues: MAVHYNKILSAKAAVDCSIPVSVNASIKYADQQRREKLRKELARCEKEFKLSKSAMQTNSKMNSKFFVNSLQRPSGEPQDQDVLIEERLTRYPSFSKSLIPSPEGLHLSLPESNKILMNGTQKYPSTAPPRYSGCGHGYDRRPRSAHQFQVVISKTPSGDLLEKHADLFSNNQSPFTPRTLKTEAKSFLSQYRYYTPAKRRRDFSDQRMEAETQTELSSFNSELGTAEKKSSKDSDVSIKQAPNYMRNGAEDKIAPLSLQGQNLAWDKSKDGILQPSSERAPCTQFSPDSKIYSDEEELLYLSFMENVTDEILKLGLFSNRFLERLFERHIRKNKHHLEEGKMRYLLHGLKVDLGCISEEEQNSFRIFNEFHFQKALTSRENRFINDTEAVNHHERQQYQEALNMLSSVPKDENKMFSFPGEFLLPAHKVKHSEGVIVQQVNDETDFEALPWDGNNPSVSDSFIDQETSVDVIEGDSDFEMVETSRELCCLSTSLSPSVPLPSIEGGSNHDKELSTLKIMEMSIED.

The interval aspartate 203–lysine 240 is disordered. Polar residues predominate over residues glutamate 212–leucine 224. A compositionally biased stretch (basic and acidic residues) spans threonine 226–valine 237.

As to quaternary structure, found in a complex with CFAP410, NEK1 and SPATA7. Interacts with NEK1. Interacts with RPGRIP1. Interacts with RPGR. Interacts with NPHP4. Interacts with NPHP1. Interacts with AHI1. In early prophase of primary spermatocytes.

Its subcellular location is the cytoplasm. The protein resides in the cytoskeleton. It localises to the cilium axoneme. The protein localises to the cilium basal body. It is found in the cell projection. Its subcellular location is the cilium. The protein resides in the photoreceptor outer segment. Involved in the maintenance of both rod and cone photoreceptor cells. Required for photoreceptor-specific localization of proximal connecting cilium (CC) proteins RPGR, AHI1, NPHP1, NPHP4, and RPGRIP1 at the distal CC, a photoreceptor-specific extension of the primary cilium transition zone. Maintenance of protein localization at the photoreceptor-specific distal CC is essential for normal microtubule stability and to prevent photoreceptor degeneration. The protein is Spermatogenesis-associated protein 7 homolog (Spata7) of Rattus norvegicus (Rat).